A 291-amino-acid chain; its full sequence is Potassium-transporting ATPase subunit beta (291 aa).

Residues 1–36 (MAALQEKKSCSQRMEEFRHYCWNPDTGQMLGRTLSR) are Cytoplasmic-facing. The chain crosses the membrane as a helical; Signal-anchor for type II membrane protein span at residues 37 to 57 (WVWISLYYVAFYVVMTGLFAL). Residues 58–291 (CIYVLMQTID…KVEFKLKIQK (234 aa)) are Extracellular-facing. 5 N-linked (GlcNAc...) asparagine glycosylation sites follow: asparagine 99, asparagine 103, asparagine 130, asparagine 146, and asparagine 161. A disulfide bridge links cysteine 131 with cysteine 152. Cysteine 162 and cysteine 178 are joined by a disulfide. Asparagine 193 and asparagine 222 each carry an N-linked (GlcNAc...) asparagine glycan. The segment at 194–291 (STPPRVDCTF…KVEFKLKIQK (98 aa)) is immunoglobulin-like. Cysteine 201 and cysteine 263 are disulfide-bonded.

Belongs to the X(+)/potassium ATPases subunit beta family. As to quaternary structure, the ATPase pump is composed of two subunits: alpha (catalytic) and beta (regulatory). Interacts with alpha subunit ATP12A; this interaction is required for the formation of a functionally active pump and targeting at the plasma membrane. Interacts (via N-terminus) with alpha subunit ATP4A (via the P-domain). N-glycosylation is necessary for assembly and functional expression of the pump at the plasma membrane.

It is found in the apical cell membrane. Its subcellular location is the cell membrane. The beta subunit of the gastric H(+)/K(+) ATPase pump which transports H(+) ions in exchange for K(+) ions across the apical membrane of parietal cells. Plays a structural and regulatory role in the assembly and membrane targeting of a functionally active pump. Within a transport cycle, the transfer of a H(+) ion across the membrane is coupled to ATP hydrolysis and is associated with a transient phosphorylation of the alpha subunit that shifts the pump conformation from inward-facing (E1) to outward-facing state (E2). Interacts with the phosphorylation domain of the alpha subunit and functions as a ratchet, stabilizing the lumenal-open E2 conformation and preventing the reverse reaction of the transport cycle. This chain is Potassium-transporting ATPase subunit beta (ATP4B), found in Oryctolagus cuniculus (Rabbit).